Consider the following 1242-residue polypeptide: Insulin receptor substrate 1 (1242 aa).

Position 3 is a phosphoserine (serine 3). The tract at residues 3–137 is mediates interaction with PHIP; the sequence is SPPESDGFSD…GAGGGGGSCS (135 aa). The 104-residue stretch at 12–115 folds into the PH domain; the sequence is DVRKVGYLRK…WYQALLQLHN (104 aa). Serine 99 carries the phosphoserine; by CK2 modification. Residues 160 to 264 form the IRS-type PTB domain; the sequence is FKEVWQVILK…EAMRAMSDEF (105 aa). Residues 262–430 form a disordered region; the sequence is DEFRPRSKSQ…SDGGFISSDE (169 aa). The span at 269 to 281 shows a compositional bias: low complexity; sequence KSQSSSNCSNPIS. A phosphoserine; by RPS6KB1 mark is found at serine 270 and serine 307. Serine 312 is modified (phosphoserine; by IKKB, MAPK8 and RPS6KB1). Serine 315, serine 323, serine 330, serine 345, and serine 348 each carry phosphoserine. The segment covering 354 to 363 has biased composition (basic residues); the sequence is THAHRHRGSA. Composition is skewed to low complexity over residues 383-404 and 412-424; these read SPSA…GSTS and SSAS…SDGG. At serine 419 the chain carries Phosphoserine. 2 positions are modified to phosphothreonine: threonine 446 and threonine 453. Position 465 is a phosphotyrosine; by INSR (tyrosine 465). The YXXM motif 1 signature appears at 465-468; sequence YICM. Phosphoserine; by RPS6KB1 is present on serine 527. The YXXM motif 2 motif lies at 551-554; the sequence is YTEM. The segment covering 592–610 has biased composition (basic and acidic residues); the sequence is LERRGGHHRPDSSTLHTDD. The interval 592–616 is disordered; sequence LERRGGHHRPDSSTLHTDDGYMPMS. Phosphotyrosine; by INSR is present on tyrosine 612. The YXXM motif 3 motif lies at 612 to 615; it reads YMPM. Residues serine 616 and serine 629 each carry the phosphoserine modification. Position 632 is a phosphotyrosine; by INSR (tyrosine 632). The YXXM motif 4 signature appears at 632-635; the sequence is YMPM. A Phosphoserine; by RPS6KB1 modification is found at serine 636. Tyrosine 662 is modified (phosphotyrosine). A YXXM motif 5 motif is present at residues 662 to 665; the sequence is YMMM. The tract at residues 668-693 is disordered; that stretch reads SGGCSPDIGGGPSSSSSSSNAVPSGT. Positions 732–735 match the YXXM motif 6 motif; sequence YMNM. Disordered stretches follow at residues 771 to 900 and 918 to 937; these read FKHT…VNIE and SPSV…EETG. The segment covering 776–785 has biased composition (basic and acidic residues); the sequence is RPGEPEEGAR. Residue serine 794 is modified to Phosphoserine; by AMPK and SIK2. Positions 801-815 are enriched in low complexity; that stretch reads AATADDSSSSTSSDS. Position 892 is a phosphoserine (serine 892). Residue tyrosine 896 is modified to Phosphotyrosine; by INSR. The tract at residues 896–898 is GRB2-binding; the sequence is YVN. Residues 918-928 are compositionally biased toward polar residues; sequence SPSVRCPSQLQ. 2 positions are modified to phosphotyrosine; by INSR: tyrosine 941 and tyrosine 989. Short sequence motifs (YXXM motif) lie at residues 941–944, 989–992, and 1012–1015; these read YMKM, YMTM, and YADM. Positions 1057–1146 are disordered; that stretch reads SSLLGGPQGP…DVKRHSSASF (90 aa). Polar residues predominate over residues 1073 to 1085; the sequence is TRVNLSPNRNQSA. Phosphoserine is present on serine 1100. Serine 1101 carries the post-translational modification Phosphoserine; by RPS6KB1 and PKC/PRKCQ. Residues 1102–1114 show a composition bias toward polar residues; sequence ETFSSTPSATRVG. The residue at position 1179 (tyrosine 1179) is a Phosphotyrosine; by INSR. Glycyl lysine isopeptide (Lys-Gly) (interchain with G-Cter in ubiquitin) cross-links involve residues lysine 1186 and lysine 1189. Residues 1190-1242 form a disordered region; that stretch reads QCPQECTPEPQPPPPPPPHQPLGSGESSSTRRSSEDLSAYASISFQKQPEDRQ. The span at 1198 to 1209 shows a compositional bias: pro residues; sequence EPQPPPPPPPHQ. Low complexity predominate over residues 1210 to 1220; sequence PLGSGESSSTR. Tyrosine 1229 is modified (phosphotyrosine; by INSR).

Interacts with UBTF and PIK3CA. Interacts (via phosphorylated YXXM motifs) with PIK3R1. Interacts with ROCK1 and FER. Interacts (via PH domain) with PHIP. Interacts with GRB2. Interacts with SOCS7. Interacts (via IRS-type PTB domain) with IGF1R and INSR (via the tyrosine-phosphorylated NPXY motif). Interacts with ALK. Interacts with EIF2AK2/PKR. Interacts with GKAP1. Interacts with DGKZ in the absence of insulin; insulin stimulation decreases this interaction. Found in a ternary complex with DGKZ and PIP5K1A in the absence of insulin stimulation. Interacts with SQSTM1; the interaction is disrupted by the presence of tensin TNS2. Interacts with NCK1 (via SH2 domain). Interacts with NCK2 (via SH3 domain). Interacts with SH2B1; this interaction enhances leptin-induced activation of the PI3-kinase pathway. Interacts with DVL2; this interaction promotes the Wnt/beta-catenin signaling pathway. Post-translationally, serine phosphorylation of IRS1 is a mechanism for insulin resistance. Ser-307, Ser-312, Ser-315, and Ser-323 phosphorylations inhibit insulin action through disruption of IRS1 interaction with the insulin receptor INSR. Phosphorylation of Tyr-896 is required for GRB2-binding. Phosphorylated by ALK. Phosphorylated at Ser-270, Ser-307, Ser-636 and Ser-1101 by RPS6KB1; phosphorylation induces accelerated degradation of IRS1. Phosphorylated on tyrosine residues in response to insulin. In skeletal muscles, dephosphorylated on Tyr-612 by TNS2 under anabolic conditions; dephosphorylation results in the proteasomal degradation of IRS1. Ubiquitinated by the Cul7-RING(FBXW8) complex in a mTOR-dependent manner, leading to its degradation: the Cul7-RING(FBXW8) complex recognizes and binds IRS1 previously phosphorylated by S6 kinase (RPS6KB1 or RPS6KB2). Ubiquitinated by TRAF4 through 'Lys-29' linkage; this ubiquitination regulates the interaction of IRS1 with IGFR and IRS1 tyrosine phosphorylation upon IGF1 stimulation. In terms of processing, S-nitrosylation at by BLVRB inhibits its activity.

It localises to the cytoplasm. Its subcellular location is the nucleus. In terms of biological role, signaling adapter protein that participates in the signal transduction from two prominent receptor tyrosine kinases, insulin receptor/INSR and insulin-like growth factor I receptor/IGF1R. Plays therefore an important role in development, growth, glucose homeostasis as well as lipid metabolism. Upon phosphorylation by the insulin receptor, functions as a signaling scaffold that propagates insulin action through binding to SH2 domain-containing proteins including the p85 regulatory subunit of PI3K, NCK1, NCK2, GRB2 or SHP2. Recruitment of GRB2 leads to the activation of the guanine nucleotide exchange factor SOS1 which in turn triggers the Ras/Raf/MEK/MAPK signaling cascade. Activation of the PI3K/AKT pathway is responsible for most of insulin metabolic effects in the cell, and the Ras/Raf/MEK/MAPK is involved in the regulation of gene expression and in cooperation with the PI3K pathway regulates cell growth and differentiation. Acts a positive regulator of the Wnt/beta-catenin signaling pathway through suppression of DVL2 autophagy-mediated degradation leading to cell proliferation. This Homo sapiens (Human) protein is Insulin receptor substrate 1 (IRS1).